Reading from the N-terminus, the 412-residue chain is Transcription termination factor 3, mitochondrial (412 aa).

The N-terminal 67 residues, 1–67 (MALLAQQLPR…IKTYRTLFWN (67 aa)), are a transit peptide targeting the mitochondrion.

This sequence belongs to the mTERF family.

It localises to the mitochondrion. Functionally, binds promoter DNA and regulates initiation of transcription. Required for normal mitochondrial transcription and translation, and for normal assembly of mitochondrial respiratory complexes. Required for normal mitochondrial function. Maintains 16S rRNA levels and functions in mitochondrial ribosome assembly by regulating the biogenesis of the 39S ribosomal subunit. This is Transcription termination factor 3, mitochondrial (Mterf3) from Mus musculus (Mouse).